Reading from the N-terminus, the 448-residue chain is O-Mevalon transferase yanI (448 aa).

N2 carries an N-linked (GlcNAc...) asparagine glycan. Helical transmembrane passes span 21–41 (VLLS…LLAV), 54–74 (YGLL…PPPP), 79–96 (AVLY…ARYF), 165–185 (FVTA…LVEV), 217–237 (LIVL…VLPL), 316–336 (MLML…SYHV), 350–370 (VKYF…CWLL), and 390–410 (IVTA…PVAL).

The protein belongs to the wax synthase family.

It is found in the membrane. The protein operates within secondary metabolite biosynthesis; terpenoid biosynthesis. In terms of biological role, O-Mevalon transferase yanI; part of the gene cluster that mediates the biosynthesis of yanuthone D, a fungal isoprenoid epoxycyclohexenone that acts as an antibiotic against fungi and bacteria. The first step of the pathway is the synthesis of 6-methylsalicylic acid (6-MSA) by the polyketide synthase yanA. 6-MSA is then converted to m-cresol by the decarboxylase yanB. The cytochrome P450 monooxygenase yanC then catalyzes the oxidation of m-cresol to toluquinol. Epoxidation of toluquinol is then performed by the short chain dehydrogenase yanD, with the help of yanE, and a further prenylation by yanG leads to 7-deacetoxyyanuthone A. The next step is the hydroxylation of C-22 of 7-deacetoxyyanuthone A by the cytochrome P450 monooxygenase yanH to yield 22-deacetylyanuthone A. O-Mevalon transferase yanI then attaches mevalon to the hydroxyl group of 22-deacetylyanuthone A to produce yanuthone E. Finally, the FAD-dependent monooxygenase yanF oxidizes the hydroxyl group at C15 of yanuthone E to form yanuthone D. Furthermore, several branching points in the pathway lead to the production of yanuthones F and G from 7-deacetoxyyanuthone A; yanuthones H and I from 22-deacetylyanuthone A; and yanuthone J from yanuthone E. The polypeptide is O-Mevalon transferase yanI (Aspergillus niger (strain ATCC 1015 / CBS 113.46 / FGSC A1144 / LSHB Ac4 / NCTC 3858a / NRRL 328 / USDA 3528.7)).